The following is a 354-amino-acid chain: Probable glucan endo-1,3-beta-glucosidase BG5 (354 aa).

The signal sequence occupies residues 1-30 (MLYLPKKLFLFFFSCIVVIVNYNNSDFVNA). The Proton donor role is filled by glutamate 137. Glutamate 276 (nucleophile) is an active-site residue. Asparagine 286 is a glycosylation site (N-linked (GlcNAc...) asparagine).

It belongs to the glycosyl hydrolase 17 family.

Its subcellular location is the secreted. The enzyme catalyses Hydrolysis of (1-&gt;3)-beta-D-glucosidic linkages in (1-&gt;3)-beta-D-glucans.. Its function is as follows. May play a role in plant defense against pathogens. The protein is Probable glucan endo-1,3-beta-glucosidase BG5 of Arabidopsis thaliana (Mouse-ear cress).